A 795-amino-acid polypeptide reads, in one-letter code: Phenylalanine--tRNA ligase beta subunit (795 aa).

Positions 39–148 (AGEFNGVVVG…ADAPVGKDFR (110 aa)) constitute a tRNA-binding domain. A B5 domain is found at 401–476 (PKLNKVQLRR…RIYGYNSIPN (76 aa)). Positions 454, 460, 463, and 464 each coordinate Mg(2+). The region spanning 701–794 (SKFPANKRDL…LKDRFNAYLR (94 aa)) is the FDX-ACB domain.

The protein belongs to the phenylalanyl-tRNA synthetase beta subunit family. Type 1 subfamily. Tetramer of two alpha and two beta subunits. It depends on Mg(2+) as a cofactor.

The protein localises to the cytoplasm. The catalysed reaction is tRNA(Phe) + L-phenylalanine + ATP = L-phenylalanyl-tRNA(Phe) + AMP + diphosphate + H(+). This is Phenylalanine--tRNA ligase beta subunit from Mannheimia succiniciproducens (strain KCTC 0769BP / MBEL55E).